We begin with the raw amino-acid sequence, 329 residues long: Alpha/beta hydrolase domain-containing protein 17C (329 aa).

Low complexity predominate over residues 53-79 (GASAPAPAQATAAAAAAQPAPQQPEEG). The tract at residues 53 to 85 (GASAPAPAQATAAAAAAQPAPQQPEEGAGAGPG) is disordered. Residues Ser211, Asp276, and His305 each act as charge relay system in the active site.

It belongs to the AB hydrolase superfamily. ABHD17 family. In terms of processing, palmitoylated on cysteine residues located in a cysteine cluster at the N-terminus which promotes membrane localization. Palmitoylation is required for post-synaptic localization and for depalmitoylating activity towards DLG4/PSD95.

It is found in the recycling endosome membrane. The protein resides in the cell projection. The protein localises to the dendritic spine. It localises to the postsynaptic density membrane. It carries out the reaction S-hexadecanoyl-L-cysteinyl-[protein] + H2O = L-cysteinyl-[protein] + hexadecanoate + H(+). Inhibited by palmostatin-B. Its function is as follows. Hydrolyzes fatty acids from S-acylated cysteine residues in proteins. Has depalmitoylating activity towards NRAS and DLG4/PSD95. This Homo sapiens (Human) protein is Alpha/beta hydrolase domain-containing protein 17C.